The following is a 596-amino-acid chain: Elongation factor 4 (596 aa).

Residues 2–184 (RNIRNFSIIA…AIVHRIPPPT (183 aa)) form the tr-type G domain. Residues 14 to 19 (DHGKST) and 131 to 134 (NKID) each bind GTP.

The protein belongs to the TRAFAC class translation factor GTPase superfamily. Classic translation factor GTPase family. LepA subfamily.

It localises to the cell inner membrane. The catalysed reaction is GTP + H2O = GDP + phosphate + H(+). In terms of biological role, required for accurate and efficient protein synthesis under certain stress conditions. May act as a fidelity factor of the translation reaction, by catalyzing a one-codon backward translocation of tRNAs on improperly translocated ribosomes. Back-translocation proceeds from a post-translocation (POST) complex to a pre-translocation (PRE) complex, thus giving elongation factor G a second chance to translocate the tRNAs correctly. Binds to ribosomes in a GTP-dependent manner. This Xanthomonas oryzae pv. oryzae (strain PXO99A) protein is Elongation factor 4.